The following is a 337-amino-acid chain: Ribosomal RNA small subunit methyltransferase H (337 aa).

S-adenosyl-L-methionine-binding positions include G36–H38, D56, F82, D100, and Q107. Residues G314 to R337 form a disordered region.

This sequence belongs to the methyltransferase superfamily. RsmH family.

Its subcellular location is the cytoplasm. The enzyme catalyses cytidine(1402) in 16S rRNA + S-adenosyl-L-methionine = N(4)-methylcytidine(1402) in 16S rRNA + S-adenosyl-L-homocysteine + H(+). In terms of biological role, specifically methylates the N4 position of cytidine in position 1402 (C1402) of 16S rRNA. The polypeptide is Ribosomal RNA small subunit methyltransferase H (Xanthomonas oryzae pv. oryzae (strain PXO99A)).